A 158-amino-acid chain; its full sequence is Snaclec agglucetin subunit alpha-2 (158 aa).

An N-terminal signal peptide occupies residues 1–23 (MGRFIFVSFGLLVVFLSLSGTGA). Intrachain disulfides connect cysteine 27–cysteine 38, cysteine 55–cysteine 152, and cysteine 127–cysteine 144. The region spanning 34–153 (YDQYCYQVIK…CIQLNPFVCK (120 aa)) is the C-type lectin domain.

It belongs to the snaclec family. As to quaternary structure, heterotetramer of the subunits alpha-1, alpha-2, beta-1 and beta-2; disulfide-linked. As to expression, expressed by the venom gland.

It localises to the secreted. Functionally, agglucetin specifically causes platelet aggregation and surface exposure of integrin alpha-IIb/beta-3 with a GPIb-(GP1BA-) dependent manner in washed platelets. It binds to human platelets in a saturable manner, and its binding is specifically blocked by anti-GP Ib mAb. It regulates endothelial cell survival and promotes angiogenesis by activating integrin alpha-v/beta-3 signaling through FAK/phosphatidylinositol 3-kinase (PI3K)/Akt pathway. This chain is Snaclec agglucetin subunit alpha-2, found in Deinagkistrodon acutus (Hundred-pace snake).